The following is a 260-amino-acid chain: Deoxyribonuclease-1 (260 aa).

Asn18 carries N-linked (GlcNAc...) asparagine glycosylation. Glu78 is an active-site residue. A disulfide bridge connects residues Cys101 and Cys104. His134 is an active-site residue. Cys173 and Cys209 are oxidised to a cystine.

The protein belongs to the DNase I family. Ca(2+) serves as cofactor. It depends on Mg(2+) as a cofactor.

Its subcellular location is the secreted. It is found in the zymogen granule. The protein resides in the nucleus envelope. It carries out the reaction Endonucleolytic cleavage to 5'-phosphodinucleotide and 5'-phosphooligonucleotide end-products.. Its function is as follows. Serum endocuclease secreted into body fluids by a wide variety of exocrine and endocrine organs. Expressed by non-hematopoietic tissues and preferentially cleaves protein-free DNA. Among other functions, seems to be involved in cell death by apoptosis. Binds specifically to G-actin and blocks actin polymerization. Together with DNASE1L3, plays a key role in degrading neutrophil extracellular traps (NETs). NETs are mainly composed of DNA fibers and are released by neutrophils to bind pathogens during inflammation. Degradation of intravascular NETs by DNASE1 and DNASE1L3 is required to prevent formation of clots that obstruct blood vessels and cause organ damage following inflammation. The polypeptide is Deoxyribonuclease-1 (DNASE1) (Ovis aries (Sheep)).